A 232-amino-acid polypeptide reads, in one-letter code: 6-phosphogluconolactonase (232 aa).

Belongs to the glucosamine/galactosamine-6-phosphate isomerase family. 6-phosphogluconolactonase subfamily.

It carries out the reaction 6-phospho-D-glucono-1,5-lactone + H2O = 6-phospho-D-gluconate + H(+). It participates in carbohydrate degradation; pentose phosphate pathway; D-ribulose 5-phosphate from D-glucose 6-phosphate (oxidative stage): step 2/3. Functionally, hydrolysis of 6-phosphogluconolactone to 6-phosphogluconate. The chain is 6-phosphogluconolactonase (pgl) from Haemophilus influenzae (strain ATCC 51907 / DSM 11121 / KW20 / Rd).